Consider the following 243-residue polypeptide: Type III pantothenate kinase (243 aa).

7–14 (DLGNSRFK) provides a ligand contact to ATP. Substrate is bound by residues Tyr91 and 98-101 (GVDR). Residue Asp100 is the Proton acceptor of the active site. Thr122 lines the ATP pocket. Residue Thr172 participates in substrate binding.

This sequence belongs to the type III pantothenate kinase family. In terms of assembly, homodimer. NH4(+) serves as cofactor. It depends on K(+) as a cofactor.

Its subcellular location is the cytoplasm. It carries out the reaction (R)-pantothenate + ATP = (R)-4'-phosphopantothenate + ADP + H(+). The protein operates within cofactor biosynthesis; coenzyme A biosynthesis; CoA from (R)-pantothenate: step 1/5. In terms of biological role, catalyzes the phosphorylation of pantothenate (Pan), the first step in CoA biosynthesis. The polypeptide is Type III pantothenate kinase (Stenotrophomonas maltophilia (strain K279a)).